A 300-amino-acid polypeptide reads, in one-letter code: Tyrosine recombinase XerC (300 aa).

The 87-residue stretch at 4 to 90 (VALSLDVSRF…ALRSFFDWLV (87 aa)) folds into the Core-binding (CB) domain. A Tyr recombinase domain is found at 111-290 (HLPKNIDVDD…DFQHLASVYD (180 aa)). Catalysis depends on residues Arg150, Lys174, His242, Arg245, and His268. The O-(3'-phospho-DNA)-tyrosine intermediate role is filled by Tyr277.

The protein belongs to the 'phage' integrase family. XerC subfamily. As to quaternary structure, forms a cyclic heterotetrameric complex composed of two molecules of XerC and two molecules of XerD, in which XerC interacts with XerD via its C-terminal region, XerD interacts with XerC via its C-terminal region and so on.

It localises to the cytoplasm. Its activity is regulated as follows. FtsK may regulate the catalytic switch between XerC and XerD in the heterotetrameric complex during the two steps of the recombination process. Functionally, site-specific tyrosine recombinase, which acts by catalyzing the cutting and rejoining of the recombining DNA molecules. Binds cooperatively to specific DNA consensus sequences that are separated from XerD binding sites by a short central region, forming the heterotetrameric XerC-XerD complex that recombines DNA substrates. The complex is essential to convert dimers of the bacterial chromosome into monomers to permit their segregation at cell division. It also contributes to the segregational stability of plasmids. In the complex XerC specifically exchanges the top DNA strands. The polypeptide is Tyrosine recombinase XerC (Salmonella typhi).